The following is a 577-amino-acid chain: 2-succinyl-5-enolpyruvyl-6-hydroxy-3-cyclohexene-1-carboxylate synthase (577 aa).

Belongs to the TPP enzyme family. MenD subfamily. In terms of assembly, homodimer. The cofactor is Mg(2+). Mn(2+) serves as cofactor. Requires thiamine diphosphate as cofactor.

The enzyme catalyses isochorismate + 2-oxoglutarate + H(+) = 5-enolpyruvoyl-6-hydroxy-2-succinyl-cyclohex-3-ene-1-carboxylate + CO2. The protein operates within quinol/quinone metabolism; 1,4-dihydroxy-2-naphthoate biosynthesis; 1,4-dihydroxy-2-naphthoate from chorismate: step 2/7. Its pathway is quinol/quinone metabolism; menaquinone biosynthesis. In terms of biological role, catalyzes the thiamine diphosphate-dependent decarboxylation of 2-oxoglutarate and the subsequent addition of the resulting succinic semialdehyde-thiamine pyrophosphate anion to isochorismate to yield 2-succinyl-5-enolpyruvyl-6-hydroxy-3-cyclohexene-1-carboxylate (SEPHCHC). This Geobacillus kaustophilus (strain HTA426) protein is 2-succinyl-5-enolpyruvyl-6-hydroxy-3-cyclohexene-1-carboxylate synthase.